The sequence spans 543 residues: Zinc finger protein tra-4 (543 aa).

A disordered region spans residues 1-38 (MDDPNQCTIKQEDSITRPRPTEAPTIQNLKQEPAIEEG). Residues 10 to 20 (KQEDSITRPRP) are compositionally biased toward basic and acidic residues. C2H2-type zinc fingers lie at residues 218-241 (VRCK…RDKH), 327-350 (PQCP…AKKH), 381-406 (YVCF…KKFH), 413-436 (FRCS…KMSH), 442-464 (FQCH…ERMH), 470-493 (FECK…RDEH), and 495-518 (YVCA…YEEH).

The protein belongs to the krueppel C2H2-type zinc-finger protein family. As to quaternary structure, interacts with histone deacetylase hda-1. May interact with nasp-1.

The protein resides in the nucleus. Its function is as follows. Probable transcription factor. Promotes normal hermaphrodite (XX) development, in concert with histone deacetylase hda-1 and nasp-1, perhaps as components of a complex. May cooperate with transcription factor tra-1 to repress male-specific genes in hermaphrodites. Synthetic multivulva (synMuv) class B protein, required to repress the induction of vulval development by let-60 Ras signaling. This Caenorhabditis elegans protein is Zinc finger protein tra-4.